The following is a 261-amino-acid chain: Thiazole synthase (261 aa).

The Schiff-base intermediate with DXP role is filled by Lys-98. 1-deoxy-D-xylulose 5-phosphate contacts are provided by residues Gly-159, Ala-185 to Gly-186, and Ala-207 to Ser-208.

This sequence belongs to the ThiG family. Homotetramer. Forms heterodimers with either ThiH or ThiS.

The protein resides in the cytoplasm. The catalysed reaction is [ThiS sulfur-carrier protein]-C-terminal-Gly-aminoethanethioate + 2-iminoacetate + 1-deoxy-D-xylulose 5-phosphate = [ThiS sulfur-carrier protein]-C-terminal Gly-Gly + 2-[(2R,5Z)-2-carboxy-4-methylthiazol-5(2H)-ylidene]ethyl phosphate + 2 H2O + H(+). Its pathway is cofactor biosynthesis; thiamine diphosphate biosynthesis. Its function is as follows. Catalyzes the rearrangement of 1-deoxy-D-xylulose 5-phosphate (DXP) to produce the thiazole phosphate moiety of thiamine. Sulfur is provided by the thiocarboxylate moiety of the carrier protein ThiS. In vitro, sulfur can be provided by H(2)S. The sequence is that of Thiazole synthase from Mycobacterium leprae (strain Br4923).